We begin with the raw amino-acid sequence, 103 residues long: Large ribosomal subunit protein bL21 (103 aa).

This sequence belongs to the bacterial ribosomal protein bL21 family. In terms of assembly, part of the 50S ribosomal subunit. Contacts protein L20.

Functionally, this protein binds to 23S rRNA in the presence of protein L20. This Shewanella frigidimarina (strain NCIMB 400) protein is Large ribosomal subunit protein bL21.